We begin with the raw amino-acid sequence, 259 residues long: Small ribosomal subunit protein uS2 (259 aa).

It belongs to the universal ribosomal protein uS2 family.

In Streptococcus pneumoniae (strain Hungary19A-6), this protein is Small ribosomal subunit protein uS2.